A 794-amino-acid chain; its full sequence is Phenylalanine--tRNA ligase beta subunit (794 aa).

The region spanning 40–158 is the tRNA-binding domain; the sequence is NSLNSELVLG…LKKYLGKDVK (119 aa). A B5 domain is found at 402-477; sequence KNKTEFEIKI…RLYSYDNIQE (76 aa). Mg(2+)-binding residues include aspartate 455, aspartate 461, glutamate 464, and glutamate 465. One can recognise an FDX-ACB domain in the interval 702–794; the sequence is SKFQSSSRDL…NVKKMKVVIR (93 aa).

The protein belongs to the phenylalanyl-tRNA synthetase beta subunit family. Type 1 subfamily. In terms of assembly, tetramer of two alpha and two beta subunits. Mg(2+) serves as cofactor.

Its subcellular location is the cytoplasm. It carries out the reaction tRNA(Phe) + L-phenylalanine + ATP = L-phenylalanyl-tRNA(Phe) + AMP + diphosphate + H(+). This Mycoplasma capricolum subsp. capricolum (strain California kid / ATCC 27343 / NCTC 10154) protein is Phenylalanine--tRNA ligase beta subunit.